Consider the following 55-residue polypeptide: Protein CADMIUM TOLERANCE 1 (55 aa).

A helical membrane pass occupies residues 24–40 (GCLYACIFTALCCFCCY).

This sequence belongs to the CYSTM1 family.

The protein localises to the cell membrane. Its subcellular location is the secreted. It localises to the cell wall. Functionally, confers resistance to heavy metal ions (e.g. cadmium (CdCl(2)) and copper (CuCl(2))) by chelating them at the plasma membrane of root cells, thus stopping their entry and reducing their accumulation. In Digitaria ciliaris (Southern crabgrass), this protein is Protein CADMIUM TOLERANCE 1.